A 111-amino-acid chain; its full sequence is MESSAKLSFARLSPRKTRLVVDMVRGKGIQNALNTLRFSPQPSAKLVSKLLSSAVANAEQKGVADVDRLYVKTIYVNGGTVLKRFVPRAMGRASKIRKPTSHICVVLAEKK.

Belongs to the universal ribosomal protein uL22 family. Part of the 50S ribosomal subunit.

Functionally, this protein binds specifically to 23S rRNA; its binding is stimulated by other ribosomal proteins, e.g. L4, L17, and L20. It is important during the early stages of 50S assembly. It makes multiple contacts with different domains of the 23S rRNA in the assembled 50S subunit and ribosome. Its function is as follows. The globular domain of the protein is located near the polypeptide exit tunnel on the outside of the subunit, while an extended beta-hairpin is found that lines the wall of the exit tunnel in the center of the 70S ribosome. This Geotalea uraniireducens (strain Rf4) (Geobacter uraniireducens) protein is Large ribosomal subunit protein uL22.